We begin with the raw amino-acid sequence, 1055 residues long: Elongation factor 3 (1055 aa).

Residue Val45 coordinates ADP. HEAT repeat units lie at residues 45–86, 96–133, 135–172, 175–213, 217–255, 257–290, and 295–337; these read VEFF…NGAA, SAEN…SMNP, ASFV…SAPY, GEAM…LVEN, EKFV…APTI, LIAP…LVDS, and RPFL…VPVE. 2 ABC transporter domains span residues 447-659 and 687-1004; these read CNIE…SYYQ and LKMR…KKAG. ADP-binding residues include Asn723, Glu933, Asn936, and His962. Disordered stretches follow at residues 987–1006 and 1024–1055; these read HNWV…AGDD and EKKL…DEEL. The span at 1033–1044 shows a compositional bias: basic residues; it reads RKAKKDRMARRK.

This sequence belongs to the ABC transporter superfamily. ABCF family. EF3 subfamily. In terms of assembly, associates with ribosomes.

The protein localises to the cytoplasm. Its subcellular location is the cytosol. It catalyses the reaction ATP + H2O = ADP + phosphate + H(+). Its pathway is protein biosynthesis; polypeptide chain elongation. Functionally, ribosome-dependent ATPase that functions in cytoplasmic translation elongation. Required for the ATP-dependent release of deacylated tRNA from the ribosomal E-site during protein biosynthesis. Stimulates the eEF1A-dependent binding of aminoacyl-tRNA to the ribosomal A-site, which has reduced affinity for tRNA as long as the E-site is occupied. Assists translation termination by stimulating the release of nascent protein from the ribosome by release factors. Appears to target calcium-channel protein CCH1 to the plasma membrane. The polypeptide is Elongation factor 3 (Cryptococcus neoformans var. neoformans serotype D (strain JEC21 / ATCC MYA-565) (Filobasidiella neoformans)).